Consider the following 80-residue polypeptide: Defensin-like protein 14 (80 aa).

The first 29 residues, 1–29 (MAKSAAIITFLFAALVLFAAFEAPIMVEA), serve as a signal peptide directing secretion. Position 30 is a pyrrolidone carboxylic acid (Gln-30). Disulfide bonds link Cys-33–Cys-80, Cys-44–Cys-65, Cys-50–Cys-74, and Cys-54–Cys-76.

It belongs to the DEFL family.

It localises to the secreted. Its function is as follows. Confers broad-spectrum resistance to pathogens. Has antifungal activity in vitro. This chain is Defensin-like protein 14 (PDF1.3), found in Arabidopsis thaliana (Mouse-ear cress).